The sequence spans 316 residues: L-lactate dehydrogenase 3 (316 aa).

Valine 16, aspartate 37, arginine 42, and tyrosine 68 together coordinate NAD(+). Position 91 (arginine 91) interacts with substrate. Residues serine 104, 121–123 (ASN), and threonine 146 contribute to the NAD(+) site. A substrate-binding site is contributed by 123–126 (NPVD). 151–154 (DSSR) contacts substrate. Residues arginine 156 and histidine 171 each contribute to the beta-D-fructose 1,6-bisphosphate site. Histidine 178 acts as the Proton acceptor in catalysis. Threonine 233 contributes to the substrate binding site.

It belongs to the LDH/MDH superfamily. LDH family. Homotetramer.

It localises to the cytoplasm. The catalysed reaction is (S)-lactate + NAD(+) = pyruvate + NADH + H(+). The protein operates within fermentation; pyruvate fermentation to lactate; (S)-lactate from pyruvate: step 1/1. With respect to regulation, allosterically activated by fructose 1,6-bisphosphate (FBP). In terms of biological role, catalyzes the conversion of lactate to pyruvate. In Bacillus thuringiensis subsp. konkukian (strain 97-27), this protein is L-lactate dehydrogenase 3.